A 39-amino-acid chain; its full sequence is Pro-opiomelanocortin (39 aa).

At Val-13 the chain carries Valine amide.

The protein belongs to the POMC family.

Its subcellular location is the secreted. Precursor protein for pituitary hormones that regulate stress and environmental adaptation. In terms of biological role, stimulates the adrenal glands to release cortisol. Functionally, anorexigenic peptide. Increases the pigmentation of skin by increasing melanin production in melanocytes. The polypeptide is Pro-opiomelanocortin (POMC) (Struthio camelus (Common ostrich)).